The chain runs to 229 residues: UPF0758 protein CLH_0547 (229 aa).

The region spanning 107–229 (KIMSPNDIAM…FISLKEKGFI (123 aa)) is the MPN domain. Residues H178, H180, and D191 each contribute to the Zn(2+) site. Positions 178–191 (HNHPSGDPTPSKED) match the JAMM motif motif.

This sequence belongs to the UPF0758 family.

The protein is UPF0758 protein CLH_0547 of Clostridium botulinum (strain Alaska E43 / Type E3).